The sequence spans 277 residues: Large ribosomal subunit protein uL2c (277 aa).

Disordered regions lie at residues 36 to 56 and 225 to 259; these read NKHS…HRGG and MNSV…GSKS.

The protein belongs to the universal ribosomal protein uL2 family. In terms of assembly, part of the 50S ribosomal subunit.

It is found in the plastid. The protein resides in the chloroplast. This is Large ribosomal subunit protein uL2c (rpl2) from Psilotum nudum (Whisk fern).